The chain runs to 483 residues: Glycogen synthase kinase-3 alpha (483 aa).

Over residues 1-15 the composition is skewed to gly residues; the sequence is MSGGGPSGGGPGGSG. A disordered region spans residues 1-96; that stretch reads MSGGGPSGGG…PPPGVKLGRD (96 aa). Residue S2 is modified to N-acetylserine. The residue at position 2 (S2) is a Phosphoserine. S21 bears the Phosphoserine; by PKB/AKT1 mark. Over residues 25–82 the composition is skewed to gly residues; sequence PGGGGGGGGGGPGGSASGPGGTGGGKASVGAMGGGVGASSSGGGPSGSGGGGSGGPGA. Phosphoserine occurs at positions 72, 77, and 97. The Protein kinase domain occupies 119–403; the sequence is YTDIKVIGNG…PLEACAHSFF (285 aa). ATP-binding positions include 125 to 133 and K148; that span reads IGNGSFGVV. D244 functions as the Proton acceptor in the catalytic mechanism. A Phosphotyrosine modification is found at Y279. A disordered region spans residues 443–483; sequence PHLRSPSGPATLTSSSQALTETQTGQDWQAPDATPTLTNSS. Over residues 450–469 the composition is skewed to polar residues; it reads GPATLTSSSQALTETQTGQD.

This sequence belongs to the protein kinase superfamily. CMGC Ser/Thr protein kinase family. GSK-3 subfamily. In terms of assembly, monomer. Interacts with ARRB2, AXIN1 and CTNNB1/beta-catenin. Interacts with CTNND2. Interacts with LMBR1L. Interacts with DDX3X. Interacts with TNFRSF10B. Post-translationally, phosphorylated by AKT1 at Ser-21: upon insulin-mediated signaling, the activated PKB/AKT1 protein kinase phosphorylates and deactivates GSK3A, resulting in the dephosphorylation and activation of GYS1. Activated by phosphorylation at Tyr-279.

The enzyme catalyses L-seryl-[tau protein] + ATP = O-phospho-L-seryl-[tau protein] + ADP + H(+). It carries out the reaction L-threonyl-[tau protein] + ATP = O-phospho-L-threonyl-[tau protein] + ADP + H(+). It catalyses the reaction L-seryl-[protein] + ATP = O-phospho-L-seryl-[protein] + ADP + H(+). The catalysed reaction is L-threonyl-[protein] + ATP = O-phospho-L-threonyl-[protein] + ADP + H(+). Its activity is regulated as follows. Activated by phosphorylation at Tyr-279. In response to insulin, inhibited by phosphorylation at Ser-21 by PKB/AKT1; phosphorylation at this site causes a conformational change, preventing access of substrates to the active site. Inhibited by lithium. In terms of biological role, constitutively active protein kinase that acts as a negative regulator in the hormonal control of glucose homeostasis, Wnt signaling and regulation of transcription factors and microtubules, by phosphorylating and inactivating glycogen synthase (GYS1 or GYS2), CTNNB1/beta-catenin, APC and AXIN1. Requires primed phosphorylation of the majority of its substrates. Contributes to insulin regulation of glycogen synthesis by phosphorylating and inhibiting GYS1 activity and hence glycogen synthesis. Regulates glycogen metabolism in liver, but not in muscle. May also mediate the development of insulin resistance by regulating activation of transcription factors. In Wnt signaling, regulates the level and transcriptional activity of nuclear CTNNB1/beta-catenin. Facilitates amyloid precursor protein (APP) processing and the generation of APP-derived amyloid plaques found in Alzheimer disease. May be involved in the regulation of replication in pancreatic beta-cells. Is necessary for the establishment of neuronal polarity and axon outgrowth. Through phosphorylation of the anti-apoptotic protein MCL1, may control cell apoptosis in response to growth factors deprivation. Acts as a regulator of autophagy by mediating phosphorylation of KAT5/TIP60 under starvation conditions, activating KAT5/TIP60 acetyltransferase activity and promoting acetylation of key autophagy regulators, such as ULK1 and RUBCNL/Pacer. Negatively regulates extrinsic apoptotic signaling pathway via death domain receptors. Promotes the formation of an anti-apoptotic complex, made of DDX3X, BRIC2 and GSK3B, at death receptors, including TNFRSF10B. The anti-apoptotic function is most effective with weak apoptotic signals and can be overcome by stronger stimulation. This is Glycogen synthase kinase-3 alpha (Gsk3a) from Rattus norvegicus (Rat).